A 195-amino-acid chain; its full sequence is Peroxiredoxin (195 aa).

The Thioredoxin domain occupies 4–162 (AMIGKPAPEF…TLRLVQAFQF (159 aa)). Residue Cys-49 is the Cysteine sulfenic acid (-SOH) intermediate of the active site.

This sequence belongs to the peroxiredoxin family. AhpC/Prx1 subfamily. Homodimer; disulfide-linked, upon oxidation.

The catalysed reaction is a hydroperoxide + [thioredoxin]-dithiol = an alcohol + [thioredoxin]-disulfide + H2O. In terms of biological role, thiol-specific peroxidase that catalyzes the reduction of hydrogen peroxide and organic hydroperoxides to water and alcohols, respectively. Plays a role in cell protection against oxidative stress by detoxifying peroxides and as sensor of hydrogen peroxide-mediated signaling events. The protein is Peroxiredoxin of Ascaris suum (Pig roundworm).